A 110-amino-acid chain; its full sequence is Nucleotide-binding protein in fmt 3'region (110 aa).

Residue 8–15 (GLSGAGKT) coordinates ATP. 57–60 (DARA) is a binding site for GTP.

It belongs to the RapZ-like family.

Its function is as follows. Displays ATPase and GTPase activities. The protein is Nucleotide-binding protein in fmt 3'region of Thermus thermophilus.